Here is a 260-residue protein sequence, read N- to C-terminus: DNA repair protein RecO (260 aa).

It belongs to the RecO family.

Its function is as follows. Involved in DNA repair and RecF pathway recombination. In Desulfosudis oleivorans (strain DSM 6200 / JCM 39069 / Hxd3) (Desulfococcus oleovorans), this protein is DNA repair protein RecO.